The primary structure comprises 432 residues: Ribosomal protein uS12 methylthiotransferase RimO (432 aa).

In terms of domain architecture, MTTase N-terminal spans 4 to 120 (HNVFLLSLGC…LLQAIGAQYR (117 aa)). The [4Fe-4S] cluster site is built by cysteine 13, cysteine 49, cysteine 83, cysteine 144, cysteine 148, and cysteine 151. In terms of domain architecture, Radical SAM core spans 130-359 (LTPPHISYLK…MELQETIAKE (230 aa)). The TRAM domain maps to 362–429 (QLFEGKELTV…AYELHGTITA (68 aa)).

It belongs to the methylthiotransferase family. RimO subfamily. [4Fe-4S] cluster is required as a cofactor.

It is found in the cytoplasm. It catalyses the reaction L-aspartate(89)-[ribosomal protein uS12]-hydrogen + (sulfur carrier)-SH + AH2 + 2 S-adenosyl-L-methionine = 3-methylsulfanyl-L-aspartate(89)-[ribosomal protein uS12]-hydrogen + (sulfur carrier)-H + 5'-deoxyadenosine + L-methionine + A + S-adenosyl-L-homocysteine + 2 H(+). Catalyzes the methylthiolation of an aspartic acid residue of ribosomal protein uS12. This is Ribosomal protein uS12 methylthiotransferase RimO from Chlorobium phaeobacteroides (strain DSM 266 / SMG 266 / 2430).